The sequence spans 407 residues: Carbamoyl phosphate synthase small chain (407 aa).

The interval 1–205 (MTETTPKTAP…LQDGYGEQDA (205 aa)) is CPSase. 3 residues coordinate L-glutamine: serine 60, glycine 257, and glycine 259. Positions 209-397 (HVVALDFGVK…INLIRERKGQ (189 aa)) constitute a Glutamine amidotransferase type-1 domain. Residue cysteine 286 is the Nucleophile of the active site. Residues leucine 287, glutamine 290, asparagine 328, glycine 330, and phenylalanine 331 each coordinate L-glutamine. Catalysis depends on residues histidine 370 and glutamate 372.

Belongs to the CarA family. Composed of two chains; the small (or glutamine) chain promotes the hydrolysis of glutamine to ammonia, which is used by the large (or ammonia) chain to synthesize carbamoyl phosphate. Tetramer of heterodimers (alpha,beta)4.

The enzyme catalyses hydrogencarbonate + L-glutamine + 2 ATP + H2O = carbamoyl phosphate + L-glutamate + 2 ADP + phosphate + 2 H(+). It carries out the reaction L-glutamine + H2O = L-glutamate + NH4(+). Its pathway is amino-acid biosynthesis; L-arginine biosynthesis; carbamoyl phosphate from bicarbonate: step 1/1. The protein operates within pyrimidine metabolism; UMP biosynthesis via de novo pathway; (S)-dihydroorotate from bicarbonate: step 1/3. Functionally, small subunit of the glutamine-dependent carbamoyl phosphate synthetase (CPSase). CPSase catalyzes the formation of carbamoyl phosphate from the ammonia moiety of glutamine, carbonate, and phosphate donated by ATP, constituting the first step of 2 biosynthetic pathways, one leading to arginine and/or urea and the other to pyrimidine nucleotides. The small subunit (glutamine amidotransferase) binds and cleaves glutamine to supply the large subunit with the substrate ammonia. In Brucella suis (strain ATCC 23445 / NCTC 10510), this protein is Carbamoyl phosphate synthase small chain.